The sequence spans 268 residues: MLTFSFLTLFPELLAPFAAEAIVGKARERGLVDVNLVNMRDFAQNRHLKVDDTPYGGGAGMVIRVDVAERALHSLPPADEVILFTPAGERFTQQVAEELAGRQHLAFLCGRYEGFDARVEGLVTRELSIGDFVMMGGEAAAACVLEAVARLVPGVLGDPESHQADSFSSGLLDYPEYTRPAEWQGQPVPEVLKGGNHAAVAAWRRAQALERTWRRRPDLLPDAGLTPQDTATLLELGVSQEELDVWGAPPAPVKRHRKRRPETTESAS.

S-adenosyl-L-methionine-binding positions include Gly-110 and 129-134 (IGDFVM). Residues 246 to 268 (WGAPPAPVKRHRKRRPETTESAS) are disordered.

Belongs to the RNA methyltransferase TrmD family. As to quaternary structure, homodimer.

The protein localises to the cytoplasm. It carries out the reaction guanosine(37) in tRNA + S-adenosyl-L-methionine = N(1)-methylguanosine(37) in tRNA + S-adenosyl-L-homocysteine + H(+). Its function is as follows. Specifically methylates guanosine-37 in various tRNAs. The polypeptide is tRNA (guanine-N(1)-)-methyltransferase (Deinococcus deserti (strain DSM 17065 / CIP 109153 / LMG 22923 / VCD115)).